The following is a 98-amino-acid chain: MNIKKFQIDGIMNQIQALEYANKMMSTNWGIYTNEPGFQFCDMEFTKKLVGKDYVCPFSSPVNGMLKPALRDLYIAMNEEMIKELKRQLKVIQFGQGN.

This is an uncharacterized protein from Enterobacteria phage T4 (Bacteriophage T4).